A 273-amino-acid chain; its full sequence is NH(3)-dependent NAD(+) synthetase (273 aa).

Residue 47 to 54 (GISGGQDS) participates in ATP binding. Asp-53 contributes to the Mg(2+) binding site. Residue Arg-139 participates in deamido-NAD(+) binding. Residue Thr-159 coordinates ATP. Glu-164 lines the Mg(2+) pocket. Deamido-NAD(+) contacts are provided by Lys-172 and Asp-179. ATP is bound by residues Lys-188 and Thr-210. 259-260 (HK) lines the deamido-NAD(+) pocket.

It belongs to the NAD synthetase family. Homodimer.

The catalysed reaction is deamido-NAD(+) + NH4(+) + ATP = AMP + diphosphate + NAD(+) + H(+). The protein operates within cofactor biosynthesis; NAD(+) biosynthesis; NAD(+) from deamido-NAD(+) (ammonia route): step 1/1. In terms of biological role, catalyzes the ATP-dependent amidation of deamido-NAD to form NAD. Uses ammonia as a nitrogen source. The chain is NH(3)-dependent NAD(+) synthetase from Staphylococcus aureus (strain MRSA252).